We begin with the raw amino-acid sequence, 580 residues long: Putative multidrug export ATP-binding/permease protein YgaD (580 aa).

At 1-17 (MGVMKRYMQFVKPYKKQ) the chain is on the cytoplasmic side. Residues 18–38 (IFVTVLIGIVKFSIPLALPLL) form a helical membrane-spanning segment. One can recognise an ABC transmembrane type-1 domain in the interval 19-307 (FVTVLIGIVK…LINSSTTLTQ (289 aa)). Over 39 to 57 (LKYVVDDIIQGGGTASDKT) the chain is Extracellular. The chain crosses the membrane as a helical span at residues 58 to 78 (TSLFTIMAIMFALFLILRPPV). The Cytoplasmic segment spans residues 79–135 (EYYRQYFAQWTASKVLYDIRAKLFDHIQKLSLRFYANTRTGEVISRVINDVEQTKDF). The helical transmembrane segment at 136–156 (VITGLMNIWLDMLTILIVISI) threads the bilayer. At 157–163 (MLTLDVK) the chain is on the extracellular side. The chain crosses the membrane as a helical span at residues 164-184 (LTLISIVLFPLYGISVKYFYG). Over 185 to 243 (RLRKLTRERSQALAQVQGHLHERIQGMPVIRSFAIEDHEQAQFNEKNGHFLDKAIRHTN) the chain is Cytoplasmic. A helical membrane pass occupies residues 244–263 (WNAKTFAVVNTITDLAPLIV). The Extracellular segment spans residues 264–268 (IACAG). The chain crosses the membrane as a helical span at residues 269 to 288 (YFVINGPLTVGTMVAFVGYI). Residues 289–580 (DRMYNPVRRL…KHLFTIQNLN (292 aa)) are Cytoplasmic-facing. The 236-residue stretch at 341–576 (VEFQNVSFQY…ESQYKHLFTI (236 aa)) folds into the ABC transporter domain. 375-382 (GMSGGGKS) provides a ligand contact to ATP.

The protein belongs to the ABC transporter superfamily. In terms of assembly, homodimer.

The protein resides in the cell membrane. Functionally, may be involved in multidrug export. Transmembrane domains (TMD) form a pore in the cell membrane and the ATP-binding domain (NBD) is responsible for energy generation. The polypeptide is Putative multidrug export ATP-binding/permease protein YgaD (ygaD) (Bacillus subtilis (strain 168)).